The primary structure comprises 146 residues: Aspartate carbamoyltransferase regulatory chain (146 aa).

Zn(2+)-binding residues include Cys-102, Cys-107, Cys-131, and Cys-134.

Belongs to the PyrI family. In terms of assembly, contains catalytic and regulatory chains. Zn(2+) serves as cofactor.

In terms of biological role, involved in allosteric regulation of aspartate carbamoyltransferase. This Clostridium botulinum (strain Okra / Type B1) protein is Aspartate carbamoyltransferase regulatory chain.